The primary structure comprises 309 residues: Agglutinin (309 aa).

Methionine 1 carries the post-translational modification N-acetylmethionine. Jacalin-type lectin domains lie at 4–148 and 163–308; these read FLTV…YVKI and PRGP…HMEY.

The protein belongs to the jacalin lectin family.

In terms of biological role, D-mannose/D-glucose-binding lectin. Binds N-linked high-mannose-type glycans. Has a preference for smaller (Man(2)-Man(6)) high-mannose-type glycans to larger (Man(7)-Man(9)) ones. Recognizes both alpha1-6 extended and alpha1-3 extended monoantennary glycans. The addition of alpha1-2Man to the Man-alpha1-3Man-beta branch results in a significant loss of affinity, but beta1-2GlcNAc has some affinity. Has less affinity for biantennary glycans, and affinity is very weak for the biantennary complex-type N-glycans with bisecting GlcNAc. No affinity is observed for tri- and tetra-antennary glycans. Has mitogenic and hemagglutinating activities. This is Agglutinin from Castanea crenata (Japanese chestnut).